The primary structure comprises 30 residues: Cytochrome c oxidase subunit 5C (30 aa).

A helical transmembrane segment spans residues 15 to 30 (VVKELVIXXXLGLXAG).

It belongs to the cytochrome c oxidase subunit 5C family.

It is found in the mitochondrion inner membrane. This protein is one of the nuclear-coded polypeptide chains of cytochrome c oxidase, the terminal oxidase in mitochondrial electron transport. The chain is Cytochrome c oxidase subunit 5C (COX5C) from Solanum tuberosum (Potato).